We begin with the raw amino-acid sequence, 377 residues long: MTVGERITLADLPLRDDLRGKSPYGAPQLQVPVRLNTNENPHPPSQALVDDVTRSVGEAAAELHRYPDRDAVALRSDLADYLNLRTGVELSVENLWAANGSNEVLQQLLQAFGGPGRSAIGFVPSYSMHPIIADATRTEWLQALRADDFGLDVDTAVREIAARRPDLVFVTSPNNPSGQSVPLEDLRRLLDAMETGILILDEAYGEFSSQPSGVALIDQYPTKLVVSRTMSKAFAFAGGRLGYLVAAPAVIEAMLLVRLPYHLSSLTQAAARAALRHADDTLASVATLIAERDRVANSLSQLGFRVVPSDANFILFGEFADAPATWRRYLDQGVLIRDVGIPGYLRTTIGLAEENDALLTASARLVETELAATLGAS.

Lys232 carries the N6-(pyridoxal phosphate)lysine modification.

The protein belongs to the class-II pyridoxal-phosphate-dependent aminotransferase family. Histidinol-phosphate aminotransferase subfamily. In terms of assembly, homodimer. Pyridoxal 5'-phosphate serves as cofactor.

It catalyses the reaction L-histidinol phosphate + 2-oxoglutarate = 3-(imidazol-4-yl)-2-oxopropyl phosphate + L-glutamate. It functions in the pathway amino-acid biosynthesis; L-histidine biosynthesis; L-histidine from 5-phospho-alpha-D-ribose 1-diphosphate: step 7/9. The chain is Histidinol-phosphate aminotransferase from Mycobacterium sp. (strain JLS).